Here is a 525-residue protein sequence, read N- to C-terminus: ESX-1 secretion-associated protein EspE (525 aa).

Disordered stretches follow at residues 244 to 341 and 375 to 494; these read AVAG…PGAA and ALQA…APVH. Positions 248-258 are enriched in acidic residues; that stretch reads DADDTTADDTA. A compositionally biased stretch (basic and acidic residues) spans 274–286; the sequence is ETSKEDGQSRHEN. A compositionally biased stretch (gly residues) spans 292–306; it reads SGGGGGATSGGGGGA. Low complexity-rich tracts occupy residues 307 to 319, 332 to 341, and 375 to 397; these read PSSA…AGTP, TPTDAQPGAA, and ALQA…AAAP. Basic and acidic residues predominate over residues 411–440; sequence DPDAEGDKDSDKRDGEGKEDGTAPRDREST.

The protein resides in the cytoplasm. This chain is ESX-1 secretion-associated protein EspE, found in Mycolicibacterium smegmatis (strain ATCC 700084 / mc(2)155) (Mycobacterium smegmatis).